The sequence spans 1442 residues: DNA polymerase III PolC-type (1442 aa).

An Exonuclease domain is found at 426–582 (YVVFDVETTG…YDTEATAYIF (157 aa)).

Belongs to the DNA polymerase type-C family. PolC subfamily.

Its subcellular location is the cytoplasm. The catalysed reaction is DNA(n) + a 2'-deoxyribonucleoside 5'-triphosphate = DNA(n+1) + diphosphate. Its function is as follows. Required for replicative DNA synthesis. This DNA polymerase also exhibits 3' to 5' exonuclease activity. In Staphylococcus epidermidis (strain ATCC 12228 / FDA PCI 1200), this protein is DNA polymerase III PolC-type.